A 368-amino-acid polypeptide reads, in one-letter code: Probable endopolygalacturonase I (368 aa).

The first 18 residues, 1–18, serve as a signal peptide directing secretion; the sequence is MHSYQLLGLAAVGSLVSA. The propeptide occupies 19–31; that stretch reads APAPSRVSEFAKK. Cysteines 35 and 50 form a disulfide. PbH1 repeat units lie at residues 140-161, 162-192, and 193-214; these read VEDSTFKGINIKNTPVQAISVQ, ATNVHLNDFTIDNSDGDDNGGHNTDGFDISE, and STGVYISGATVKNQDDCIAINS. Asp-207 (proton donor) is an active-site residue. Residues Cys-209 and Cys-225 are joined by a disulfide bond. Residue His-229 is part of the active site. 3 PbH1 repeats span residues 244-265, 273-295, and 307-352; these read VKNVTISDSTVSNSANGVRIKT, VSEITYSNIQLSGITDYGIVIEQ, and STGI…DLSG. The N-linked (GlcNAc...) asparagine glycan is linked to Asn-246. 2 cysteine pairs are disulfide-bonded: Cys-335-Cys-340 and Cys-359-Cys-368.

Belongs to the glycosyl hydrolase 28 family.

The protein resides in the secreted. It carries out the reaction (1,4-alpha-D-galacturonosyl)n+m + H2O = (1,4-alpha-D-galacturonosyl)n + (1,4-alpha-D-galacturonosyl)m.. Its function is as follows. Involved in maceration and soft-rotting of plant tissue. Hydrolyzes the 1,4-alpha glycosidic bonds of de-esterified pectate in the smooth region of the plant cell wall. The protein is Probable endopolygalacturonase I (pgaI) of Aspergillus niger (strain ATCC MYA-4892 / CBS 513.88 / FGSC A1513).